The primary structure comprises 237 residues: Uridylate kinase (237 aa).

Residue 11 to 14 coordinates ATP; that stretch reads KLSG. Position 53 (Gly-53) interacts with UMP. Residues Gly-54 and Arg-58 each contribute to the ATP site. Residues Asp-73 and 134 to 141 each bind UMP; that span reads TGNPFFTT. ATP contacts are provided by Thr-161, Tyr-167, and Asp-170.

This sequence belongs to the UMP kinase family. As to quaternary structure, homohexamer.

The protein resides in the cytoplasm. It carries out the reaction UMP + ATP = UDP + ADP. The protein operates within pyrimidine metabolism; CTP biosynthesis via de novo pathway; UDP from UMP (UMPK route): step 1/1. Inhibited by UTP. In terms of biological role, catalyzes the reversible phosphorylation of UMP to UDP. The protein is Uridylate kinase of Burkholderia vietnamiensis (strain G4 / LMG 22486) (Burkholderia cepacia (strain R1808)).